The sequence spans 164 residues: 3-isopropylmalate dehydratase small subunit 1 (164 aa).

It belongs to the LeuD family. LeuD type 2 subfamily. In terms of assembly, heterodimer of LeuC and LeuD.

The enzyme catalyses (2R,3S)-3-isopropylmalate = (2S)-2-isopropylmalate. It participates in amino-acid biosynthesis; L-leucine biosynthesis; L-leucine from 3-methyl-2-oxobutanoate: step 2/4. In terms of biological role, catalyzes the isomerization between 2-isopropylmalate and 3-isopropylmalate, via the formation of 2-isopropylmaleate. This is 3-isopropylmalate dehydratase small subunit 1 (leuD1) from Pyrococcus abyssi (strain GE5 / Orsay).